Reading from the N-terminus, the 383-residue chain is UDP-N-acetylglucosamine--N-acetylmuramyl-(pentapeptide) pyrophosphoryl-undecaprenol N-acetylglucosamine transferase (383 aa).

UDP-N-acetyl-alpha-D-glucosamine-binding positions include 11–13 (TGG), Asn125, Arg166, Ser191, Ile246, and Gln291. Positions 364–383 (PNGRERTPIEAEKKAPRSNS) are disordered. Residues 366–383 (GRERTPIEAEKKAPRSNS) are compositionally biased toward basic and acidic residues.

The protein belongs to the glycosyltransferase 28 family. MurG subfamily.

The protein resides in the cell inner membrane. The catalysed reaction is di-trans,octa-cis-undecaprenyl diphospho-N-acetyl-alpha-D-muramoyl-L-alanyl-D-glutamyl-meso-2,6-diaminopimeloyl-D-alanyl-D-alanine + UDP-N-acetyl-alpha-D-glucosamine = di-trans,octa-cis-undecaprenyl diphospho-[N-acetyl-alpha-D-glucosaminyl-(1-&gt;4)]-N-acetyl-alpha-D-muramoyl-L-alanyl-D-glutamyl-meso-2,6-diaminopimeloyl-D-alanyl-D-alanine + UDP + H(+). Its pathway is cell wall biogenesis; peptidoglycan biosynthesis. In terms of biological role, cell wall formation. Catalyzes the transfer of a GlcNAc subunit on undecaprenyl-pyrophosphoryl-MurNAc-pentapeptide (lipid intermediate I) to form undecaprenyl-pyrophosphoryl-MurNAc-(pentapeptide)GlcNAc (lipid intermediate II). This chain is UDP-N-acetylglucosamine--N-acetylmuramyl-(pentapeptide) pyrophosphoryl-undecaprenol N-acetylglucosamine transferase, found in Myxococcus xanthus (strain DK1622).